The following is a 356-amino-acid chain: Epoxide hydrolase B (356 aa).

Residues 28–129 (PLVVLLHGFP…RCAGVVGISV (102 aa)) form the AB hydrolase-1 domain. The active-site Nucleophile is D104. H333 functions as the Proton acceptor in the catalytic mechanism.

It belongs to the AB hydrolase superfamily. Epoxide hydrolase family. As to quaternary structure, homodimer.

The enzyme catalyses an epoxide + H2O = an ethanediol. Its function is as follows. Could be involved in detoxification of extraneous host-cell epoxides. Catalyzes the hydrolysis of small aromatic epoxide-containing substrates such as trans-1,3-diphenylpropene oxide, trans and cis-stilbene oxide, and terpenoid epoxide. This is Epoxide hydrolase B from Mycobacterium tuberculosis (strain CDC 1551 / Oshkosh).